The chain runs to 315 residues: T-box transcription factor tbx-8 (315 aa).

Residues 11–195 constitute a DNA-binding region (T-box); the sequence is EDQDKLWNLF…FNPFAKGFRE (185 aa). Residues 193–203 show a composition bias toward basic and acidic residues; that stretch reads FREGSQSDRKR. Disordered regions lie at residues 193 to 235 and 293 to 315; these read FREG…SVSP and PPPSLKNVKKEEQEDIEQEINVV. Over residues 205-225 the composition is skewed to low complexity; sequence SPSADDSTTDESSSQVSSPQP. Acidic residues predominate over residues 305-315; sequence QEDIEQEINVV.

It localises to the nucleus. Functionally, transcription factor. Involved in the control of early morphogenesis of the intestine, hypodermis and body-wall muscle. Involved in regulating expression of vab-7. Appears to have partially redundant function to tbx-9. In Caenorhabditis elegans, this protein is T-box transcription factor tbx-8 (tbx-8).